The following is a 225-amino-acid chain: Cytidylate kinase (225 aa).

11-19 is an ATP binding site; the sequence is GPAAAGKST.

The protein belongs to the cytidylate kinase family. Type 1 subfamily.

It localises to the cytoplasm. It catalyses the reaction CMP + ATP = CDP + ADP. It carries out the reaction dCMP + ATP = dCDP + ADP. The sequence is that of Cytidylate kinase from Bacillus pumilus (strain SAFR-032).